Here is a 259-residue protein sequence, read N- to C-terminus: Ubiquitin-conjugating enzyme E2 J2 (259 aa).

Residues 1–226 (MSSTSSKRAP…AGLQQANRHH (226 aa)) are Cytoplasmic-facing. In terms of domain architecture, UBC core spans 12-162 (TATQRLKQDY…DKVFCELFPE (151 aa)). Catalysis depends on Cys94, which acts as the Glycyl thioester intermediate. A helical; Anchor for type IV membrane protein membrane pass occupies residues 227–247 (GLLGGALANLFVIVGFAAFAY). At 248 to 259 (TVKYVLRSIAQE) the chain is on the lumenal side.

It belongs to the ubiquitin-conjugating enzyme family. Auto-ubiquitinated.

The protein resides in the endoplasmic reticulum membrane. It catalyses the reaction S-ubiquitinyl-[E1 ubiquitin-activating enzyme]-L-cysteine + [E2 ubiquitin-conjugating enzyme]-L-cysteine = [E1 ubiquitin-activating enzyme]-L-cysteine + S-ubiquitinyl-[E2 ubiquitin-conjugating enzyme]-L-cysteine.. It participates in protein modification; protein ubiquitination. In terms of biological role, catalyzes the covalent attachment of ubiquitin to other proteins. Seems to function in the selective degradation of misfolded membrane proteins from the endoplasmic reticulum (ERAD). In cooperation with the GATOR2 complex, catalyzes 'Lys-6'-linked ubiquitination of NPRL2. The protein is Ubiquitin-conjugating enzyme E2 J2 (UBE2J2) of Homo sapiens (Human).